The primary structure comprises 107 residues: Protein Rev (107 aa).

A phosphoserine; by host CK2 mark is found at Ser-5 and Ser-8. Positions 18–26 are homomultimerization; sequence IIKILYQSN. Disordered regions lie at residues 26 to 50 and 82 to 107; these read NPYP…ARQR and NINC…VGNP. Residues 34–50 carry the Nuclear localization signal and RNA-binding (RRE) motif; the sequence is TRQARRNRRRRWRARQR. A compositionally biased stretch (basic residues) spans 36–50; it reads QARRNRRRRWRARQR. The Nuclear export signal and binding to XPO1 signature appears at 73 to 84; that stretch reads FQLPPIERLNIN. The segment covering 86–101 has biased composition (low complexity); it reads SESGGTSGTQQPQGNT. Residue Ser-92 is modified to Phosphoserine; by host.

It belongs to the HIV-1 REV protein family. In terms of assembly, homomultimer; when bound to the RRE. Multimeric assembly is essential for activity and may involve XPO1. Binds to human KPNB1, XPO1, TNPO1, RANBP5 and IPO7. Interacts with the viral Integrase. Interacts with human KHDRBS1. Interacts with human NAP1; this interaction decreases Rev multimerization and stimulates its activity. Interacts with human DEAD-box helicases DDX3 and DDX24; these interactions may serve for viral RNA export to the cytoplasm and packaging, respectively. Interacts with human PSIP1; this interaction may inhibit HIV-1 DNA integration by promoting dissociation of the Integrase-LEDGF/p75 complex. Post-translationally, asymmetrically arginine dimethylated at one site by host PRMT6. Methylation impairs the RNA-binding activity and export of viral RNA from the nucleus to the cytoplasm. In terms of processing, phosphorylated by protein kinase CK2. Presence of, and maybe binding to the N-terminus of the regulatory beta subunit of CK2 is necessary for CK2-mediated Rev's phosphorylation.

The protein resides in the host nucleus. Its subcellular location is the host nucleolus. It localises to the host cytoplasm. Its function is as follows. Escorts unspliced or incompletely spliced viral pre-mRNAs (late transcripts) out of the nucleus of infected cells. These pre-mRNAs carry a recognition sequence called Rev responsive element (RRE) located in the env gene, that is not present in fully spliced viral mRNAs (early transcripts). This function is essential since most viral proteins are translated from unspliced or partially spliced pre-mRNAs which cannot exit the nucleus by the pathway used by fully processed cellular mRNAs. Rev itself is translated from a fully spliced mRNA that readily exits the nucleus. Rev's nuclear localization signal (NLS) binds directly to KPNB1/Importin beta-1 without previous binding to KPNA1/Importin alpha-1. KPNB1 binds to the GDP bound form of RAN (Ran-GDP) and targets Rev to the nucleus. In the nucleus, the conversion from Ran-GDP to Ran-GTP dissociates Rev from KPNB1 and allows Rev's binding to the RRE in viral pre-mRNAs. Rev multimerization on the RRE via cooperative assembly exposes its nuclear export signal (NES) to the surface. Rev can then form a complex with XPO1/CRM1 and Ran-GTP, leading to nuclear export of the complex. Conversion from Ran-GTP to Ran-GDP mediates dissociation of the Rev/RRE/XPO1/RAN complex, so that Rev can return to the nucleus for a subsequent round of export. Beside KPNB1, also seems to interact with TNPO1/Transportin-1, RANBP5/IPO5 and IPO7/RANBP7 for nuclear import. The nucleoporin-like HRB/RIP is an essential cofactor that probably indirectly interacts with Rev to release HIV RNAs from the perinuclear region to the cytoplasm. The chain is Protein Rev from Human immunodeficiency virus type 1 group M subtype C (isolate 92BR025) (HIV-1).